Here is a 118-residue protein sequence, read N- to C-terminus: Large ribosomal subunit protein bL19 (118 aa).

Belongs to the bacterial ribosomal protein bL19 family.

Functionally, this protein is located at the 30S-50S ribosomal subunit interface and may play a role in the structure and function of the aminoacyl-tRNA binding site. This is Large ribosomal subunit protein bL19 (rplS) from Serratia marcescens.